Here is a 466-residue protein sequence, read N- to C-terminus: F-box/WD repeat-containing protein 15 (466 aa).

The 45-residue stretch at 1-45 (MAIHLPCLPMMKILSYLDAYSLLQAAQVNKDWNELASSDVLWRKL) folds into the F-box domain. WD repeat units follow at residues 101–143 (GYAC…ITWK), 146–185 (EQPA…ALAT), 187–228 (NLKS…LIST), 339–379 (LQCH…KTFQ), and 381–419 (CPEM…LRKC).

Part of an SCF (SKP1-CUL1-F-box protein) E3 ubiquitin-protein ligase complex. Interacts with KAT7 and SKP1. As to expression, specifically expressed in oocytes from follicles of the medullary region of the ovary.

It localises to the cytoplasm. It is found in the cytosol. The protein localises to the endoplasmic reticulum. Its subcellular location is the nucleus. The protein operates within protein modification; protein ubiquitination. In terms of biological role, substrate-recognition component of an SCF (SKP1-CUL1-F-box protein)-type E3 ubiquitin ligase complex. Promotes KAT7 ubiquitination and subsequent degradation in collaboration with MAP2K1 kinase, leading to reduced histone H3K14 acetylation and increased cell proliferation. The protein is F-box/WD repeat-containing protein 15 of Mus musculus (Mouse).